The following is a 470-amino-acid chain: Neuraminidase (470 aa).

Over 1–14 (MNPNQKIITIGSVS) the chain is Intravirion. The tract at residues 11–32 (GSVSLGLVVLNILLHIVSITIT) is involved in apical transport and lipid raft association. The helical transmembrane segment at 15 to 35 (LGLVVLNILLHIVSITITVLV) threads the bilayer. Positions 32–86 (TVLVLPGNGNNGSCNGTVIREYNETVRIEKVTQWHNTNVIEYIERSESDHFMNNT) are hypervariable stalk region. Over 36–470 (LPGNGNNGSC…AILPFDIDKM (435 aa)) the chain is Virion surface. Asn-42, Asn-46, Asn-54, and Asn-84 each carry an N-linked (GlcNAc...) asparagine; by host glycan. Residues 89–470 (LCDAKGFAPF…AILPFDIDKM (382 aa)) are head of neuraminidase. Intrachain disulfides connect Cys-90–Cys-417, Cys-122–Cys-127, Cys-182–Cys-229, Cys-231–Cys-236, Cys-277–Cys-290, Cys-279–Cys-288, Cys-316–Cys-335, and Cys-421–Cys-446. Arg-116 serves as a coordination point for substrate. N-linked (GlcNAc...) asparagine; by host glycosylation occurs at Asn-144. Catalysis depends on Asp-149, which acts as the Proton donor/acceptor. Arg-150 is a substrate binding site. 275 to 276 (EE) is a binding site for substrate. Arg-291 provides a ligand contact to substrate. Asp-292 contacts Ca(2+). An N-linked (GlcNAc...) asparagine; by host glycan is attached at Asn-293. Ca(2+)-binding residues include Gly-296 and Asp-322. Arg-368 is a substrate binding site. Residue Asn-398 is glycosylated (N-linked (GlcNAc...) asparagine; by host). Catalysis depends on Tyr-402, which acts as the Nucleophile.

Belongs to the glycosyl hydrolase 34 family. As to quaternary structure, homotetramer. Requires Ca(2+) as cofactor. In terms of processing, N-glycosylated.

It localises to the virion membrane. Its subcellular location is the host apical cell membrane. It carries out the reaction Hydrolysis of alpha-(2-&gt;3)-, alpha-(2-&gt;6)-, alpha-(2-&gt;8)- glycosidic linkages of terminal sialic acid residues in oligosaccharides, glycoproteins, glycolipids, colominic acid and synthetic substrates.. With respect to regulation, inhibited by the neuraminidase inhibitors zanamivir (Relenza) and oseltamivir (Tamiflu). These drugs interfere with the release of progeny virus from infected cells and are effective against all influenza strains. Resistance to neuraminidase inhibitors is quite rare. Catalyzes the removal of terminal sialic acid residues from viral and cellular glycoconjugates. Cleaves off the terminal sialic acids on the glycosylated HA during virus budding to facilitate virus release. Additionally helps virus spread through the circulation by further removing sialic acids from the cell surface. These cleavages prevent self-aggregation and ensure the efficient spread of the progeny virus from cell to cell. Otherwise, infection would be limited to one round of replication. Described as a receptor-destroying enzyme because it cleaves a terminal sialic acid from the cellular receptors. May facilitate viral invasion of the upper airways by cleaving the sialic acid moieties on the mucin of the airway epithelial cells. Likely to plays a role in the budding process through its association with lipid rafts during intracellular transport. May additionally display a raft-association independent effect on budding. Plays a role in the determination of host range restriction on replication and virulence. Sialidase activity in late endosome/lysosome traffic seems to enhance virus replication. In Aves (Horse), this protein is Neuraminidase.